The following is a 320-amino-acid chain: o-succinylbenzoate synthase (320 aa).

The active-site Proton donor is Lys133. Mg(2+) contacts are provided by Asp161, Glu190, and Asp213. The active-site Proton acceptor is the Lys235.

This sequence belongs to the mandelate racemase/muconate lactonizing enzyme family. MenC type 1 subfamily. Requires a divalent metal cation as cofactor.

The catalysed reaction is (1R,6R)-6-hydroxy-2-succinyl-cyclohexa-2,4-diene-1-carboxylate = 2-succinylbenzoate + H2O. It functions in the pathway quinol/quinone metabolism; 1,4-dihydroxy-2-naphthoate biosynthesis; 1,4-dihydroxy-2-naphthoate from chorismate: step 4/7. Its pathway is quinol/quinone metabolism; menaquinone biosynthesis. In terms of biological role, converts 2-succinyl-6-hydroxy-2,4-cyclohexadiene-1-carboxylate (SHCHC) to 2-succinylbenzoate (OSB). This is o-succinylbenzoate synthase from Salmonella typhi.